A 25-amino-acid chain; its full sequence is Css54 (25 aa).

Expressed by the venom gland.

It localises to the secreted. The protein localises to the target cell membrane. In terms of biological role, amphipathic peptide that shows antibacterial activity against E.coli (MIC=12.5 ug/ml) and S.aureus (MIC=12.5 ug/ml). Has hemolytic activity against human erythrocytes (25 uM provokes 83% of hemolysis). May act by disrupting the integrity of the bacterial cell membrane. Increases efficacy of antibiotics (ethambutol, pyrazinamide, isoniazid, rifampicin) when tested against S.aureus, probably by facilitating their incorporation into the bacteria. In Centruroides suffusus (Durango bark scorpion), this protein is Css54.